The chain runs to 76 residues: Theta defensin subunit A (76 aa).

Residues 1-22 form the signal peptide; sequence MRTFALLTAMLLLVALHAQAEA. The propeptide occupies 23–64; the sequence is RQARADEAAAQQQPGADDQGMAHSFTWPENAALPLSESAKGL. Residues 25–45 are disordered; the sequence is ARADEAAAQQQPGADDQGMAH. The span at 30–44 shows a compositional bias: low complexity; sequence AAAQQQPGADDQGMA. R65 participates in a covalent cross-link: Cyclopeptide (Arg-Cys) (interchain with C-73 in subunit A); in form BTD-3. R65 participates in a covalent cross-link: Cyclopeptide (Arg-Cys) (interchain with C-73 in subunit B); in form BTD-1. Residue R65 forms a Cyclopeptide (Arg-Cys) (interchain with C-73 in subunit C); in form BTD-4 linkage. R65 participates in a covalent cross-link: Cyclopeptide (Arg-Cys) (interchain with C-73 in subunit D); in form BTD-7. Cysteines 68 and 73 form a disulfide. Residue C73 forms a Cyclopeptide (Cys-Arg) (interchain with R-65 in subunit A); in form BTD-3 linkage. A Cyclopeptide (Cys-Arg) (interchain with R-65 in subunit B); in form BTD-1 cross-link involves residue C73. A Cyclopeptide (Cys-Arg) (interchain with R-65 in subunit C); in form BTD-4 cross-link involves residue C73. Residue C73 forms a Cyclopeptide (Cys-Arg) (interchain with R-65 in subunit D); in form BTD-7 linkage. Positions 74–76 are excised as a propeptide; it reads RLL.

The protein belongs to the alpha-defensin family. Theta subfamily. BTD-1 is a cyclic heterodimer composed of subunits A and B; disulfide-linked. BTD-3 is a cyclic homodimer composed of two subunits A; disulfide-linked. BTD-4 is a cyclic heterodimer composed of subunits A and C; disulfide-linked. BTD-7 is a cyclic heterodimer composed of subunits A and D; disulfide-linked. In terms of processing, forms a cyclic peptide with subunit B (BTD-1), subunit A (BTD-3), subunit C (BTD-4), or subunit D (BTD-7). An additional intersubunit disulfide bond is formed.

Its function is as follows. BTD-1, BTD-3, BTD-4 and BTD-7 have antimicrobial activity against the Gram-negative bacterium E.coli ML35, the Gram-positive bacterium S.aureus 502a, and the fungus C.albicans 16820. BTD-3 is more effective against E.coli than BTD-1, BTD-4 and BTD-7. In Papio anubis (Olive baboon), this protein is Theta defensin subunit A (BTDA).